Consider the following 995-residue polypeptide: Putative pentatricopeptide repeat-containing protein At5g09950 (995 aa).

PPR repeat units follow at residues 35 to 65 (DVYL…MPLR), 66 to 100 (NCVS…GIFS), 101 to 137 (NQYA…SYAV), 138 to 169 (DAVV…IEVK), 170 to 204 (NSVS…GSRP), 205 to 241 (TEYT…GLLT), 242 to 276 (DLFV…NAVT), 278 to 303 (NGLM…MNSM), 307 to 342 (SPES…VITT), 348 to 378 (MVGI…MTDK), 379 to 413 (DSVS…DILP), 414 to 448 (GSFT…GIDL), 449 to 483 (NVSV…DQVS), 484 to 515 (WNSI…GQKL), 516 to 550 (NRIT…NIAD), 551 to 581 (EATT…MAER), 583 to 617 (DNVT…GQRL), 618 to 652 (DSFM…CLES), 653 to 683 (DVVV…MPVR), 684 to 718 (NSYS…GQTP), 720 to 750 (DHVT…MSDS), and 756 to 786 (RIEH…MPMK). Residues 791–868 (IWRTVLGACC…EAGYSWVTMK (78 aa)) form a type E motif region. Residues 869–899 (DGVHMFVAGDKSHPDADVIYKKLKELNRKMR) are type E(+) motif. The segment at 900–995 (DAGYVPQTGF…DGACSCSDFW (96 aa)) is type DYW motif.

It belongs to the PPR family. PCMP-H subfamily.

The chain is Putative pentatricopeptide repeat-containing protein At5g09950 (PCMP-H35) from Arabidopsis thaliana (Mouse-ear cress).